Here is a 294-residue protein sequence, read N- to C-terminus: Acetyl-coenzyme A carboxylase carboxyl transferase subunit beta (294 aa).

Residues Ile-30 to Glu-294 form the CoA carboxyltransferase N-terminal domain. Positions 34, 37, 53, and 56 each coordinate Zn(2+). The segment at Cys-34–Cys-56 adopts a C4-type zinc-finger fold.

The protein belongs to the AccD/PCCB family. In terms of assembly, acetyl-CoA carboxylase is a heterohexamer composed of biotin carboxyl carrier protein (AccB), biotin carboxylase (AccC) and two subunits each of ACCase subunit alpha (AccA) and ACCase subunit beta (AccD). Requires Zn(2+) as cofactor.

The protein localises to the cytoplasm. It catalyses the reaction N(6)-carboxybiotinyl-L-lysyl-[protein] + acetyl-CoA = N(6)-biotinyl-L-lysyl-[protein] + malonyl-CoA. It participates in lipid metabolism; malonyl-CoA biosynthesis; malonyl-CoA from acetyl-CoA: step 1/1. Component of the acetyl coenzyme A carboxylase (ACC) complex. Biotin carboxylase (BC) catalyzes the carboxylation of biotin on its carrier protein (BCCP) and then the CO(2) group is transferred by the transcarboxylase to acetyl-CoA to form malonyl-CoA. This Listeria monocytogenes serovar 1/2a (strain ATCC BAA-679 / EGD-e) protein is Acetyl-coenzyme A carboxylase carboxyl transferase subunit beta.